The sequence spans 1104 residues: Protein transport protein SEC31 homolog B (1104 aa).

7 WD repeats span residues 5-45 (KGVG…EIFK), 62-109 (PSSE…GSQP), 120-160 (VHKG…EPSH), 170-210 (ATQG…PIIN), 214-257 (SVRR…SPVR), 261-301 (GHQR…IVAE), and 304-344 (AGNN…RYGV). The residue at position 526 (Thr-526) is a Phosphothreonine. The interval 527–562 (PVSTSAKDFMPSDTDFSTKGEETQEMQEEEEESSDP) is disordered. Acidic residues predominate over residues 549–560 (TQEMQEEEEESS). The WD 8 repeat unit spans residues 662–707 (TLCDALASKLMAAGNTLAAVLCYICAGNVDRTVEIWSRSLANERDG). Disordered stretches follow at residues 782–811 (LSAE…PTQA), 851–874 (HQAQ…PSMR), 892–931 (QQPT…QYPN), and 952–994 (TPGV…SNVP). 3 stretches are compositionally biased toward polar residues: residues 786–811 (PETN…PTQA), 863–874 (PAPTSNAQPSMR), and 892–908 (QQPT…SNNA). A compositionally biased stretch (low complexity) spans 959–977 (SVQPASPPTQQAAAQAAPA).

This sequence belongs to the WD repeat SEC31 family. In terms of assembly, interacts with SEC13A and SEC13B.

Its subcellular location is the golgi apparatus. The protein resides in the endoplasmic reticulum. In terms of biological role, required for protein transport from the endoplasmic reticulum to the Golgi apparatus. This Arabidopsis thaliana (Mouse-ear cress) protein is Protein transport protein SEC31 homolog B.